A 56-amino-acid polypeptide reads, in one-letter code: ComX pheromone (56 aa).

The propeptide occupies 1–50; the sequence is MMQDLINYFLSYPEVLKKLKNREACLIGFSSNETETIIKAYNDYHLSSPT. Trp54 is modified (tryptophan derivative). Trp54 carries the 3'-farnesyl-2',N2-cyclotryptophan lipid modification.

Interacts directly with the sensor histidine kinase ComP and stimulates its activity. Post-translationally, trp-54 is modified by farnesylation, which is essential for activity. Modified by the tryptophan prenyltransferase ComQ before export to the extracellular environment. The type of isoprenyl derivative differs among the different pherotypes and depends on ComX primary sequence.

It localises to the secreted. Part of a major quorum-sensing system that regulates the development of genetic competence. Acts through the activation of the two-component regulatory system ComP/ComA composed of a sensor histidine kinase, ComP, and a response regulator, ComA. The polypeptide is ComX pheromone (Bacillus mojavensis).